The primary structure comprises 1036 residues: Isoleucine--tRNA ligase (1036 aa).

The 'HIGH' region motif lies at Pro46–His56. A 'KMSKS' region motif is present at residues Lys589–Arg593. Lys592 contributes to the ATP binding site.

Belongs to the class-I aminoacyl-tRNA synthetase family. IleS type 2 subfamily. In terms of assembly, monomer. Requires Zn(2+) as cofactor.

The protein localises to the cytoplasm. The enzyme catalyses tRNA(Ile) + L-isoleucine + ATP = L-isoleucyl-tRNA(Ile) + AMP + diphosphate. Functionally, catalyzes the attachment of isoleucine to tRNA(Ile). As IleRS can inadvertently accommodate and process structurally similar amino acids such as valine, to avoid such errors it has two additional distinct tRNA(Ile)-dependent editing activities. One activity is designated as 'pretransfer' editing and involves the hydrolysis of activated Val-AMP. The other activity is designated 'posttransfer' editing and involves deacylation of mischarged Val-tRNA(Ile). In Chlamydia trachomatis serovar L2b (strain UCH-1/proctitis), this protein is Isoleucine--tRNA ligase.